The primary structure comprises 151 residues: Deoxyuridine 5'-triphosphate nucleotidohydrolase (151 aa).

Residues 69–71 (RSG), Asn82, and 86–88 (TID) each bind substrate.

Belongs to the dUTPase family. Mg(2+) is required as a cofactor.

The catalysed reaction is dUTP + H2O = dUMP + diphosphate + H(+). It functions in the pathway pyrimidine metabolism; dUMP biosynthesis; dUMP from dCTP (dUTP route): step 2/2. Functionally, this enzyme is involved in nucleotide metabolism: it produces dUMP, the immediate precursor of thymidine nucleotides and it decreases the intracellular concentration of dUTP so that uracil cannot be incorporated into DNA. The polypeptide is Deoxyuridine 5'-triphosphate nucleotidohydrolase (Rhodospirillum centenum (strain ATCC 51521 / SW)).